Consider the following 472-residue polypeptide: Ribosomal protein uS12 methylthiotransferase RimO (472 aa).

The MTTase N-terminal domain maps to 33–143 (NRIGFVSLGC…VLKHVHKYVP (111 aa)). Positions 42, 78, 107, 175, 179, and 182 each coordinate [4Fe-4S] cluster. In terms of domain architecture, Radical SAM core spans 161–398 (LTPKHYAYLK…MELQAEISAE (238 aa)). The TRAM domain occupies 401–467 (ARFVGRTLDI…EHDLWAEVVD (67 aa)).

It belongs to the methylthiotransferase family. RimO subfamily. Requires [4Fe-4S] cluster as cofactor.

The protein resides in the cytoplasm. It carries out the reaction L-aspartate(89)-[ribosomal protein uS12]-hydrogen + (sulfur carrier)-SH + AH2 + 2 S-adenosyl-L-methionine = 3-methylsulfanyl-L-aspartate(89)-[ribosomal protein uS12]-hydrogen + (sulfur carrier)-H + 5'-deoxyadenosine + L-methionine + A + S-adenosyl-L-homocysteine + 2 H(+). Its function is as follows. Catalyzes the methylthiolation of an aspartic acid residue of ribosomal protein uS12. The protein is Ribosomal protein uS12 methylthiotransferase RimO of Shewanella putrefaciens (strain CN-32 / ATCC BAA-453).